A 277-amino-acid chain; its full sequence is 3-methyl-2-oxobutanoate hydroxymethyltransferase (277 aa).

Mg(2+) contacts are provided by D42 and D81. Residues 42-43 (DS), D81, and K110 contribute to the 3-methyl-2-oxobutanoate site. E112 is a binding site for Mg(2+). The active-site Proton acceptor is E179.

Belongs to the PanB family. As to quaternary structure, homodecamer; pentamer of dimers. Mg(2+) serves as cofactor.

It is found in the cytoplasm. The enzyme catalyses 3-methyl-2-oxobutanoate + (6R)-5,10-methylene-5,6,7,8-tetrahydrofolate + H2O = 2-dehydropantoate + (6S)-5,6,7,8-tetrahydrofolate. The protein operates within cofactor biosynthesis; (R)-pantothenate biosynthesis; (R)-pantoate from 3-methyl-2-oxobutanoate: step 1/2. Its function is as follows. Catalyzes the reversible reaction in which hydroxymethyl group from 5,10-methylenetetrahydrofolate is transferred onto alpha-ketoisovalerate to form ketopantoate. This is 3-methyl-2-oxobutanoate hydroxymethyltransferase from Anaplasma marginale (strain St. Maries).